Here is a 129-residue protein sequence, read N- to C-terminus: Protein BEX2 (129 aa).

Residues methionine 1 to isoleucine 37 are disordered. Basic and acidic residues predominate over residues glutamate 15 to proline 36. Omega-N-methylarginine is present on arginine 51. Residues histidine 118–histidine 122 are his cluster. Position 126 (cysteine 126) interacts with Zn(2+).

This sequence belongs to the BEX family. As to quaternary structure, interacts with LMO2, possibly leading to regulate the transcriptional activity of a DNA-binding complex containing LMO2. Interacts with OMP. In terms of tissue distribution, primarily localized to neuronal cells within several regions of the brain, including the olfactory epithelium, bulb, peri/paraventricular nuclei, suprachiasmatic nucleus, arcuate nucleus, median eminence, lateral hypothalamic area, thalamus, hippocampus and cerebellum (at protein level).

Its subcellular location is the cytoplasm. The protein localises to the nucleus. Its function is as follows. Regulator of mitochondrial apoptosis and G1 cell cycle. Regulates the level of PP2A regulatory subunit B and PP2A phosphatase activity. In absence of reductive stress, acts as a pseudosubstrate for the CRL2(FEM1B) complex: associates with FEM1B via zinc, thereby preventing association between FEM1B and its substrates. The protein is Protein BEX2 of Mus musculus (Mouse).